Reading from the N-terminus, the 199-residue chain is Peroxynitrite isomerase (199 aa).

The short motif at 20–26 (GVWEGSG) is the GXWXGXG element. Heme b-binding residues include K158 and H190.

This sequence belongs to the nitrobindin family. In terms of assembly, homodimer. Heme b is required as a cofactor.

It carries out the reaction peroxynitrite = nitrate. Its pathway is nitrogen metabolism. Its function is as follows. Heme-binding protein able to scavenge peroxynitrite and to protect free L-tyrosine against peroxynitrite-mediated nitration, by acting as a peroxynitrite isomerase that converts peroxynitrite to nitrate. Therefore, this protein likely plays a role in peroxynitrite sensing and in the detoxification of reactive nitrogen and oxygen species (RNS and ROS, respectively). Is able to bind nitric oxide (NO) in vitro, but may act as a sensor of peroxynitrite levels in vivo. The polypeptide is Peroxynitrite isomerase (Clavibacter sepedonicus (Clavibacter michiganensis subsp. sepedonicus)).